Reading from the N-terminus, the 293-residue chain is Protein orai (293 aa).

The Cytoplasmic portion of the chain corresponds to 1–122 (MPRSHDPSRV…RAQLKASSRT (122 aa)). The disordered stretch occupies residues 62–81 (STAGGGSRNGVGSKEGSVTS). Residues 123 to 141 (SALLAGFAMVCLVELQYDQ) form a helical membrane-spanning segment. Topologically, residues 142–146 (STPKP) are extracellular. A helical membrane pass occupies residues 147 to 167 (LLIVLGVVTSLLVSVHLLALM). At 168–198 (MSTCILPYMEATGCTQDSPHIKLKFYIDLSW) the chain is on the cytoplasmic side. The helical transmembrane segment at 199-219 (LFSTCIGLLLFLVEIGVIFYV) threads the bilayer. Topologically, residues 220 to 230 (KFTAVGYPTAG) are extracellular. Residues 231–251 (YITTAMLVPVGVVFVVFSYLI) form a helical membrane-spanning segment. The Cytoplasmic segment spans residues 252 to 293 (HKNRVSHSLGRFKHKVDTMKQFLDVEANLQKSTLAPSTIRDI).

The protein belongs to the Orai family. In terms of tissue distribution, expressed in gonad sheath cells, hypodermis, intestine and spermatheca. Coexpressed with stim-1.

The protein localises to the membrane. Its function is as follows. Ca(2+) release-activated Ca(2+)-like (CRAC-like) channel subunit which mediates Ca(2+) influx and increase in Ca(2+)-selective current by synergy with the Ca(2+) sensor, stim-1. Required for Ca(2+) and IP3-dependent contractile activity of sheath cells and the spermatheca. Affects brood size and somatic cell function. In Caenorhabditis elegans, this protein is Protein orai (orai-1).